Consider the following 484-residue polypeptide: Glycogen synthase (484 aa).

An ADP-alpha-D-glucose-binding site is contributed by Lys-18.

Belongs to the glycosyltransferase 1 family. Bacterial/plant glycogen synthase subfamily.

The catalysed reaction is [(1-&gt;4)-alpha-D-glucosyl](n) + ADP-alpha-D-glucose = [(1-&gt;4)-alpha-D-glucosyl](n+1) + ADP + H(+). It participates in glycan biosynthesis; glycogen biosynthesis. Functionally, synthesizes alpha-1,4-glucan chains using ADP-glucose. The polypeptide is Glycogen synthase (Vibrio cholerae serotype O1 (strain ATCC 39541 / Classical Ogawa 395 / O395)).